A 381-amino-acid polypeptide reads, in one-letter code: Guanine nucleotide-binding protein G(olf) subunit alpha (381 aa).

Residues Met1 to Asn25 form a disordered region. Gly2 is lipidated: N-palmitoyl glycine. Cys3 is lipidated: S-palmitoyl cysteine. A compositionally biased stretch (basic and acidic residues) spans Thr10 to Asn25. The G-alpha domain maps to Ala41–Leu381. Positions Arg44 to Thr57 are G1 motif. Residues Glu52, Ser53, Gly54, Lys55, Ser56, and Thr57 each coordinate GTP. Ser56 contacts Mg(2+). Residue Thr178 is modified to Phosphothreonine. A G2 motif region spans residues Asp183 to Thr191. GTP-binding residues include Leu185 and Arg186. The residue at position 188 (Arg188) is an ADP-ribosylarginine; by cholera toxin. Thr191 is a binding site for GTP. Mg(2+) contacts are provided by Thr191 and Asp210. The interval Phe206–Arg215 is G3 motif. The GTP site is built by Gly213, Asn279, Lys280, Asp282, and Ala353. The interval Ile275–Asp282 is G4 motif. Positions Thr351–Thr356 are G5 motif.

The protein belongs to the G-alpha family. G(s) subfamily. In terms of assembly, g proteins are composed of 3 units; alpha, beta and gamma. The alpha chain contains the guanine nucleotide binding site. Interacts with GAS2L2. Interacts (GDP-bound form) with RIC8B (via C-terminus); promoting GNAL folding and association with the plasma membrane. As to expression, detected in olfactory neuroepithelium, brain, testis, and to a lower extent in retina, lung alveoli, spleen. Trace amounts where seen in kidney, adrenal gland and liver. Found to be expressed in all the insulinomas examined.

It localises to the cell membrane. The catalysed reaction is GTP + H2O = GDP + phosphate + H(+). Functionally, guanine nucleotide-binding protein (G protein) involved as transducer in olfactory signal transduction controlled by G protein-coupled receptors (GPCRs). Contains the guanine nucleotide binding site and alternates between an active, GTP-bound state and an inactive, GDP-bound state. Signaling by an activated GPCR promotes GDP release and GTP binding. The alpha subunit has a low GTPase activity that converts bound GTP to GDP, thereby terminating the signal. Both GDP release and GTP hydrolysis are modulated by numerous regulatory proteins. GNAL/G(olf) alpha specifically mediates olfactory signal transduction within the olfactory neuroepithelium and the basal ganglia following GPCRs activation. Acts by promoting the specific activation of adenylyl cyclase ADCY3, resulting in increased levels of the signaling molecule cAMP. The chain is Guanine nucleotide-binding protein G(olf) subunit alpha from Homo sapiens (Human).